A 223-amino-acid polypeptide reads, in one-letter code: Cutinase (223 aa).

The signal sequence occupies residues M1–A19. The cysteines at positions 46 and 124 are disulfide-linked. Residue S135 is the Nucleophile of the active site. C185 and C192 form a disulfide bridge. D189 is a catalytic residue. The active-site Proton donor/acceptor is H202.

The protein belongs to the cutinase family. In terms of processing, the 2 disulfide bonds play a critical role in holding the catalytic residues in juxta-position; reduction of the disulfide bridges results in the complete inactivation of the enzyme.

Its subcellular location is the secreted. The catalysed reaction is cutin + H2O = cutin monomers.. Functionally, catalyzes the hydrolysis of complex carboxylic polyesters found in the cell wall of plants. Degrades cutin, a macromolecule that forms the structure of the plant cuticle. Allows pathogenic fungi to penetrate through the cuticular barrier into the host plant during the initial stage of fungal infection. The chain is Cutinase (CUT) from Didymella rabiei (Chickpea ascochyta blight fungus).